Consider the following 334-residue polypeptide: tRNA N6-adenosine threonylcarbamoyltransferase (334 aa).

Residues His-112 and His-116 each contribute to the Fe cation site. Residues 135 to 139 (VVSGG), Asp-168, Gly-181, Asp-185, and Asn-274 contribute to the substrate site. Fe cation is bound at residue Asp-303.

Belongs to the KAE1 / TsaD family. It depends on Fe(2+) as a cofactor.

The protein resides in the cytoplasm. It carries out the reaction L-threonylcarbamoyladenylate + adenosine(37) in tRNA = N(6)-L-threonylcarbamoyladenosine(37) in tRNA + AMP + H(+). Its function is as follows. Required for the formation of a threonylcarbamoyl group on adenosine at position 37 (t(6)A37) in tRNAs that read codons beginning with adenine. Is involved in the transfer of the threonylcarbamoyl moiety of threonylcarbamoyl-AMP (TC-AMP) to the N6 group of A37, together with TsaE and TsaB. TsaD likely plays a direct catalytic role in this reaction. The protein is tRNA N6-adenosine threonylcarbamoyltransferase of Anaeromyxobacter dehalogenans (strain 2CP-C).